A 108-amino-acid polypeptide reads, in one-letter code: MAEEFVQQRLANNKVTIFVKFTCPFCRNALDILNKFSFKRGAYEIVDIKEFKPENELRDYFEQITGGRTVPRIFFGKTSIGGYSDLLEIDNMDALGDILSSIGVLRTC.

A Glutaredoxin domain is found at Glu3–Arg106. Cysteines 23 and 26 form a disulfide.

It belongs to the glutaredoxin family.

It localises to the virion. Has thioltransferase and dehydroascorbate reductase activities. This chain is Glutaredoxin-1 (OPG075), found in Cowpox virus (strain GRI-90 / Grishak) (CPV).